Reading from the N-terminus, the 291-residue chain is Formamidopyrimidine-DNA glycosylase (291 aa).

The active-site Schiff-base intermediate with DNA is the Pro-2. The active-site Proton donor is the Glu-3. Catalysis depends on Lys-58, which acts as the Proton donor; for beta-elimination activity. Positions 104, 123, and 166 each coordinate DNA. The FPG-type zinc finger occupies 257–291 (KVYDREGEPCPTCGGTVQRFVQNGRSTFWCPKCQK). Arg-281 (proton donor; for delta-elimination activity) is an active-site residue.

It belongs to the FPG family. In terms of assembly, monomer. The cofactor is Zn(2+).

It carries out the reaction Hydrolysis of DNA containing ring-opened 7-methylguanine residues, releasing 2,6-diamino-4-hydroxy-5-(N-methyl)formamidopyrimidine.. It catalyses the reaction 2'-deoxyribonucleotide-(2'-deoxyribose 5'-phosphate)-2'-deoxyribonucleotide-DNA = a 3'-end 2'-deoxyribonucleotide-(2,3-dehydro-2,3-deoxyribose 5'-phosphate)-DNA + a 5'-end 5'-phospho-2'-deoxyribonucleoside-DNA + H(+). In terms of biological role, involved in base excision repair of DNA damaged by oxidation or by mutagenic agents. Acts as a DNA glycosylase that recognizes and removes damaged bases. Has a preference for oxidized purines, such as 7,8-dihydro-8-oxoguanine (8-oxoG). Has AP (apurinic/apyrimidinic) lyase activity and introduces nicks in the DNA strand. Cleaves the DNA backbone by beta-delta elimination to generate a single-strand break at the site of the removed base with both 3'- and 5'-phosphates. The protein is Formamidopyrimidine-DNA glycosylase of Rhodopseudomonas palustris (strain ATCC BAA-98 / CGA009).